Here is a 149-residue protein sequence, read N- to C-terminus: D-aminoacyl-tRNA deacylase (149 aa).

The Gly-cisPro motif, important for rejection of L-amino acids signature appears at 141 to 142 (GP).

Belongs to the DTD family. Homodimer.

Its subcellular location is the cytoplasm. It catalyses the reaction glycyl-tRNA(Ala) + H2O = tRNA(Ala) + glycine + H(+). It carries out the reaction a D-aminoacyl-tRNA + H2O = a tRNA + a D-alpha-amino acid + H(+). Functionally, an aminoacyl-tRNA editing enzyme that deacylates mischarged D-aminoacyl-tRNAs. Also deacylates mischarged glycyl-tRNA(Ala), protecting cells against glycine mischarging by AlaRS. Acts via tRNA-based rather than protein-based catalysis; rejects L-amino acids rather than detecting D-amino acids in the active site. By recycling D-aminoacyl-tRNA to D-amino acids and free tRNA molecules, this enzyme counteracts the toxicity associated with the formation of D-aminoacyl-tRNA entities in vivo and helps enforce protein L-homochirality. In Hydrogenovibrio crunogenus (strain DSM 25203 / XCL-2) (Thiomicrospira crunogena), this protein is D-aminoacyl-tRNA deacylase.